Reading from the N-terminus, the 245-residue chain is 1-(5-phosphoribosyl)-5-[(5-phosphoribosylamino)methylideneamino] imidazole-4-carboxamide isomerase (245 aa).

D8 serves as the catalytic Proton acceptor. The Proton donor role is filled by D129.

Belongs to the HisA/HisF family.

It is found in the cytoplasm. The enzyme catalyses 1-(5-phospho-beta-D-ribosyl)-5-[(5-phospho-beta-D-ribosylamino)methylideneamino]imidazole-4-carboxamide = 5-[(5-phospho-1-deoxy-D-ribulos-1-ylimino)methylamino]-1-(5-phospho-beta-D-ribosyl)imidazole-4-carboxamide. The protein operates within amino-acid biosynthesis; L-histidine biosynthesis; L-histidine from 5-phospho-alpha-D-ribose 1-diphosphate: step 4/9. In Rhodopseudomonas palustris (strain BisB18), this protein is 1-(5-phosphoribosyl)-5-[(5-phosphoribosylamino)methylideneamino] imidazole-4-carboxamide isomerase.